Consider the following 311-residue polypeptide: Urease accessory protein UreD 3 (311 aa).

This sequence belongs to the UreD family. As to quaternary structure, ureD, UreF and UreG form a complex that acts as a GTP-hydrolysis-dependent molecular chaperone, activating the urease apoprotein by helping to assemble the nickel containing metallocenter of UreC. The UreE protein probably delivers the nickel.

It is found in the cytoplasm. In terms of biological role, required for maturation of urease via the functional incorporation of the urease nickel metallocenter. The chain is Urease accessory protein UreD 3 from Methylorubrum populi (strain ATCC BAA-705 / NCIMB 13946 / BJ001) (Methylobacterium populi).